Reading from the N-terminus, the 322-residue chain is Quinolinate synthase (322 aa).

The iminosuccinate site is built by His-36 and Ser-53. Cys-98 is a [4Fe-4S] cluster binding site. Residues 124–126 and Ser-141 contribute to the iminosuccinate site; that span reads YIN. Cys-184 contacts [4Fe-4S] cluster. Iminosuccinate is bound by residues 210 to 212 and Thr-227; that span reads HPE. Cys-278 lines the [4Fe-4S] cluster pocket.

It belongs to the quinolinate synthase family. Type 2 subfamily. Requires [4Fe-4S] cluster as cofactor.

It localises to the cytoplasm. It catalyses the reaction iminosuccinate + dihydroxyacetone phosphate = quinolinate + phosphate + 2 H2O + H(+). The protein operates within cofactor biosynthesis; NAD(+) biosynthesis; quinolinate from iminoaspartate: step 1/1. Catalyzes the condensation of iminoaspartate with dihydroxyacetone phosphate to form quinolinate. In Chloroherpeton thalassium (strain ATCC 35110 / GB-78), this protein is Quinolinate synthase.